The following is a 345-amino-acid chain: Acyl-CoA--sterol O-acyltransferase 1 (345 aa).

The next 9 membrane-spanning stretches (helical) occupy residues 1-21, 32-52, 54-74, 86-106, 120-140, 148-168, 231-251, 258-278, and 291-311; these read MASFIKAWGLVIISLCYTFFI, LILFFPVFLIFFIVPFLIYSL, LLGITAFFIAWLANFKLLLFA, PLSLPIFLAVSCLPIKIQLSP, GPLIYTIKAVFVVLIIKAYEY, VVLTLYAIHIYFALEIILAAT, ILAAFGTFVVSGIMHELIFFY, DWKMMWFFLINGFCTTVEIAI, and AISQVLTLTFVMVTALWLFLP.

It belongs to the wax synthase family.

Its subcellular location is the membrane. Its function is as follows. Involved in the esterification of cycloartenol. Not implicated in the formation of sterol esters in flowers or during seed maturation. Has a substrate preference toward saturated fatty acyl donors (16:0 &gt; 18:0 &gt; 16:1 &gt; 18:1). Does not require triacyglycerols (TAGs) as a fatty acyl donor, and is unable to acylate diacylglycerol to produce TAG. This is Acyl-CoA--sterol O-acyltransferase 1 (ASAT1) from Arabidopsis thaliana (Mouse-ear cress).